Here is a 211-residue protein sequence, read N- to C-terminus: Superoxide dismutase [Fe] (211 aa).

Residues histidine 34, histidine 85, aspartate 171, and histidine 175 each contribute to the Fe cation site.

This sequence belongs to the iron/manganese superoxide dismutase family. In terms of assembly, homotetramer at high temperature; homodimer at room temperature. Fe cation is required as a cofactor.

It is found in the cytoplasm. The catalysed reaction is 2 superoxide + 2 H(+) = H2O2 + O2. In terms of biological role, destroys superoxide anion radicals which are normally produced within the cells and which are toxic to biological systems. The sequence is that of Superoxide dismutase [Fe] (sod) from Sulfolobus acidocaldarius (strain ATCC 33909 / DSM 639 / JCM 8929 / NBRC 15157 / NCIMB 11770).